The following is a 452-amino-acid chain: UPF0210 protein Daud_1353 (452 aa).

It belongs to the UPF0210 family. In terms of assembly, homodimer.

The sequence is that of UPF0210 protein Daud_1353 from Desulforudis audaxviator (strain MP104C).